Reading from the N-terminus, the 1217-residue chain is Disease resistance protein RPS4 (1217 aa).

The TIR domain occupies 14 to 175; that stretch reads PQHQVFINFR…EIVKAVKTAL (162 aa). Position 23 to 28 (23 to 28) interacts with NAD(+); it reads RGADLR. Positions 33–34 are important for interaction with RRS1; sequence SH. Glutamate 88 is a catalytic residue. One can recognise an NB-ARC domain in the interval 211–472; the sequence is EQRLKDLEEK…FRSQDKDYVE (262 aa). LRR repeat units lie at residues 581–606, 614–636, 637–659, 682–706, 708–728, 729–749, 750–774, 796–818, 819–842, 843–860, and 861–887; these read MGNL…KINI, LKEV…DFNP, INLV…DKDT, AEKL…MKKM, MLAF…EMNL, ISLK…PLIS, DNIE…KLQR, LKAL…EIDI, SFLN…SVQY, LCLS…GISQ, and LSQL…NLQC. Residues 1161–1195 form a disordered region; that stretch reads TTEGVDGRVNKKKKTRMDNGRPKKKQRSGRDDNQT. The Nuclear localization signal signature appears at 1170–1177; that stretch reads NKKKKTRM.

This sequence belongs to the disease resistance TIR-NB-LRR family. In terms of assembly, interacts with EDS1. Interacts with SRFR1. Interacts with RRS1.

Its subcellular location is the endomembrane system. The protein resides in the cytoplasm. It is found in the nucleus. It carries out the reaction NAD(+) + H2O = ADP-D-ribose + nicotinamide + H(+). In terms of biological role, disease resistance (R) protein that specifically recognizes the AvrRps4 type III effector avirulence protein from P.syringae. Resistance proteins guard the plant against pathogens that contain an appropriate avirulence protein via an indirect interaction with this avirulence protein. That triggers a defense system including the hypersensitive response, which restricts the pathogen growth. Probably acts as a NAD(+) hydrolase (NADase): in response to activation, catalyzes cleavage of NAD(+) into ADP-D-ribose (ADPR) and nicotinamide; NAD(+) cleavage triggering a defense system that promotes cell death. The combined presence of both regular and alternative RPS4 transcripts with truncated open reading frames (ORFs) is necessary for function. RPS4 function is regulated at multiple levels, including gene expression, alternative splicing, and protein stability. When over-expressed, confers temperature-conditioned EDS1-dependent auto-immunity. Heterodimerization with RRS1 is required to form a functional complex to recognize AvrRps4 and PopP2. Abscisic acid deficiency enhances nuclear accumulation of RPS4 and its cell death-inducing activity. The protein is Disease resistance protein RPS4 of Arabidopsis thaliana (Mouse-ear cress).